A 257-amino-acid polypeptide reads, in one-letter code: Isoprenyl transferase (257 aa).

Asp33 is an active-site residue. Asp33 is a binding site for Mg(2+). Substrate is bound by residues 34–37 (GNGR), Trp38, Arg46, His50, and 78–80 (STE). Asn81 acts as the Proton acceptor in catalysis. Substrate contacts are provided by residues Trp82, Arg84, Arg204, and 210–212 (RLS). Glu223 contacts Mg(2+).

Belongs to the UPP synthase family. Homodimer. Requires Mg(2+) as cofactor.

Catalyzes the condensation of isopentenyl diphosphate (IPP) with allylic pyrophosphates generating different type of terpenoids. This is Isoprenyl transferase from Clostridium acetobutylicum (strain ATCC 824 / DSM 792 / JCM 1419 / IAM 19013 / LMG 5710 / NBRC 13948 / NRRL B-527 / VKM B-1787 / 2291 / W).